Consider the following 200-residue polypeptide: DNA-directed RNA polymerase subunit 7-like protein (200 aa).

It belongs to the eukaryotic RPB7/RPC8 RNA polymerase subunit family.

It is found in the nucleus. The protein is DNA-directed RNA polymerase subunit 7-like protein (NRPB7L) of Arabidopsis thaliana (Mouse-ear cress).